The sequence spans 148 residues: uncharacterized protein (148 aa).

The helical transmembrane segment at 22–40 (YFLSLTVVISIIHLFTTCV) threads the bilayer. The tract at residues 43-141 (HNHSTHFPYL…YYPISRHYLH (99 aa)) is histidine-rich.

The protein resides in the host membrane. This is an uncharacterized protein from African swine fever virus (strain Badajoz 1971 Vero-adapted) (Ba71V).